Here is a 211-residue protein sequence, read N- to C-terminus: Glycerol-3-phosphate acyltransferase (211 aa).

5 helical membrane passes run 5–25 (VILG…TGYL), 55–75 (GPGL…ILVA), 85–105 (PVPA…AVLA), 126–146 (VLLA…LVVL), and 168–188 (WFFT…AFVI).

Belongs to the PlsY family. As to quaternary structure, probably interacts with PlsX.

Its subcellular location is the cell inner membrane. It carries out the reaction an acyl phosphate + sn-glycerol 3-phosphate = a 1-acyl-sn-glycero-3-phosphate + phosphate. It participates in lipid metabolism; phospholipid metabolism. In terms of biological role, catalyzes the transfer of an acyl group from acyl-phosphate (acyl-PO(4)) to glycerol-3-phosphate (G3P) to form lysophosphatidic acid (LPA). This enzyme utilizes acyl-phosphate as fatty acyl donor, but not acyl-CoA or acyl-ACP. This is Glycerol-3-phosphate acyltransferase from Thermosynechococcus vestitus (strain NIES-2133 / IAM M-273 / BP-1).